The following is a 109-amino-acid chain: A-type ATP synthase subunit F (109 aa).

Belongs to the V-ATPase F subunit family. As to quaternary structure, has multiple subunits with at least A(3), B(3), C, D, E, F, H, I and proteolipid K(x).

The protein localises to the cell membrane. Functionally, component of the A-type ATP synthase that produces ATP from ADP in the presence of a proton gradient across the membrane. The sequence is that of A-type ATP synthase subunit F from Haloquadratum walsbyi (strain DSM 16790 / HBSQ001).